Reading from the N-terminus, the 158-residue chain is Transcription elongation factor GreA (158 aa).

It belongs to the GreA/GreB family.

Its function is as follows. Necessary for efficient RNA polymerase transcription elongation past template-encoded arresting sites. The arresting sites in DNA have the property of trapping a certain fraction of elongating RNA polymerases that pass through, resulting in locked ternary complexes. Cleavage of the nascent transcript by cleavage factors such as GreA or GreB allows the resumption of elongation from the new 3'terminus. GreA releases sequences of 2 to 3 nucleotides. This chain is Transcription elongation factor GreA, found in Pelobacter propionicus (strain DSM 2379 / NBRC 103807 / OttBd1).